A 143-amino-acid polypeptide reads, in one-letter code: uncharacterized protein (143 aa).

It localises to the cytoplasm. It is found in the nucleus. This is an uncharacterized protein from Schizosaccharomyces pombe (strain 972 / ATCC 24843) (Fission yeast).